Here is a 443-residue protein sequence, read N- to C-terminus: Glutamine synthetase (443 aa).

Positions 16–97 (KRIKFVQLIF…VYGYIYKDGK (82 aa)) constitute a GS beta-grasp domain. In terms of domain architecture, GS catalytic spans 103–443 (PRGVLRRTLE…EWELERYFFI (341 aa)). Mg(2+) is bound by residues Glu126 and Glu128. Position 176 (Glu176) interacts with ATP. Mg(2+) contacts are provided by Glu181 and Glu188. Residue Gly233 coordinates L-glutamate. Residue His237 participates in Mg(2+) binding. ATP contacts are provided by residues 239 to 241 (HIS) and Ser241. The L-glutamate site is built by Arg287, Glu293, and Arg305. ATP is bound by residues Arg305 and Arg310. Glu322 is a binding site for Mg(2+). Residue Arg324 participates in L-glutamate binding.

This sequence belongs to the glutamine synthetase family. Oligomer of 12 subunits arranged in the form of two hexagons. Mg(2+) serves as cofactor.

It is found in the cytoplasm. It catalyses the reaction L-glutamate + NH4(+) + ATP = L-glutamine + ADP + phosphate + H(+). Functionally, probably involved in nitrogen metabolism via ammonium assimilation. Catalyzes the ATP-dependent biosynthesis of glutamine from glutamate and ammonia. In Pyrococcus horikoshii (strain ATCC 700860 / DSM 12428 / JCM 9974 / NBRC 100139 / OT-3), this protein is Glutamine synthetase.